A 576-amino-acid chain; its full sequence is Trehalase 2 (576 aa).

This sequence belongs to the glycosyl hydrolase 15 family.

The enzyme catalyses alpha,alpha-trehalose + H2O = alpha-D-glucose + beta-D-glucose. It functions in the pathway glycan degradation; trehalose degradation; D-glucose from alpha,alpha-trehalose: step 1/1. In terms of biological role, catalyzes the hydrolysis of alpha,alpha-trehalose into two molecules of D-glucose. This chain is Trehalase 2 (treH2), found in Sulfolobus acidocaldarius (strain ATCC 33909 / DSM 639 / JCM 8929 / NBRC 15157 / NCIMB 11770).